Consider the following 176-residue polypeptide: Nucleoside triphosphate/diphosphate phosphatase (176 aa).

The active-site Proton donor is arginine 23. Positions 87, 103, 105, 107, 120, and 123 each coordinate Mg(2+).

It belongs to the Ntdp family. Mg(2+) serves as cofactor.

The enzyme catalyses a ribonucleoside 5'-triphosphate + H2O = a ribonucleoside 5'-diphosphate + phosphate + H(+). It catalyses the reaction a ribonucleoside 5'-diphosphate + H2O = a ribonucleoside 5'-phosphate + phosphate + H(+). Has nucleoside phosphatase activity towards nucleoside triphosphates and nucleoside diphosphates. In Bacillus cereus (strain G9842), this protein is Nucleoside triphosphate/diphosphate phosphatase.